The following is a 392-amino-acid chain: MNKIIAANQTLTSEAVSEGHPDKIADQISDAILDEILKEDKNAKVACEVIIAQNLVVIAGEINSPVKKNIDIKEVAKNIIKDIGYTNIDYGLDYKTITVIDAIGNQSRDIINAIEKKGSNALGAGDQGIIFGYACDETKNFLPAPYELANSILKKASNLRKSGAIKWLRPDSKSQVTIEYDKNRNPVKIKNIIVSHQHHPNISQKLIQQTIIEEIIKPTVQDKSMLDENTAYCINPSGNFVIGGPTGDTGLTGRKIIADSYGGFARHGGGAYSGKDATKVDRSAAYMARYIAKNMVAAGISKEFELQLAYAIGIENPISIQITGGINDPKYANKILNFIVNNFDLTPNGIIEKLKLKQPIYLKTCTYGHFGKNEFEWEKLDFVKKIQTALKK.

An ATP-binding site is contributed by histidine 20. Mg(2+) is bound at residue aspartate 22. A K(+)-binding site is contributed by glutamate 48. 2 residues coordinate L-methionine: glutamate 61 and glutamine 106. The tract at residues 106–116 (QSRDIINAIEK) is flexible loop. ATP is bound by residues 171–173 (DSK), aspartate 248, 254–255 (RK), alanine 271, and lysine 275. L-methionine is bound at residue aspartate 248. L-methionine is bound at residue lysine 279.

This sequence belongs to the AdoMet synthase family. Homotetramer; dimer of dimers. It depends on Mg(2+) as a cofactor. The cofactor is K(+).

The protein localises to the cytoplasm. It catalyses the reaction L-methionine + ATP + H2O = S-adenosyl-L-methionine + phosphate + diphosphate. It functions in the pathway amino-acid biosynthesis; S-adenosyl-L-methionine biosynthesis; S-adenosyl-L-methionine from L-methionine: step 1/1. Catalyzes the formation of S-adenosylmethionine (AdoMet) from methionine and ATP. The overall synthetic reaction is composed of two sequential steps, AdoMet formation and the subsequent tripolyphosphate hydrolysis which occurs prior to release of AdoMet from the enzyme. The polypeptide is S-adenosylmethionine synthase (Borreliella burgdorferi (strain ATCC 35210 / DSM 4680 / CIP 102532 / B31) (Borrelia burgdorferi)).